A 435-amino-acid chain; its full sequence is MKTQVEHAVDGIITEQMATVAHDEDLSPEYIRTMVAEGKIVIPNNSNSTPKPVGIGKGLRTKVNASIGTSSDIVNYQAEVRKARIAEQAGADTLMELSVGGNLDRVRREVLAAVNLPVGNVPLYQAFCDATRKYGSADKLDPEELFDLIEQQCEDGLAFMAIHCGINRYTIERLRKQHYRYGGLVSKGGTSMVSWMEHNNRENPLYEQFDRVVAILKKYDVCLSLGNGLRAGAIHDSHDRAQMQELIINCELAQLGREMGCQMLVEGPGHMPLDEVEANILIQKRMSNEAPYYMLGPISTDVVPGFDHISSAIGAAQSARYGADLICYITPAEHLALPNEDDVRSGVEAARVATYIGDMNKYPDKGRQRDKAMSKARRDLQWDKQFELALMPEQARQVRDSRLPEEEHSCTMCGNFCAANGSKTLFDGDLQGDKC.

Residues methionine 95, tyrosine 124, histidine 163, serine 186 to glycine 188, asparagine 227 to arginine 230, and glutamate 266 each bind substrate. Histidine 270 is a binding site for Zn(2+). Tyrosine 293 is a substrate binding site. Histidine 334 provides a ligand contact to Zn(2+). [4Fe-4S] cluster is bound by residues cysteine 410, cysteine 413, and cysteine 417.

The protein belongs to the ThiC family. 5-hydroxybenzimidazole synthase subfamily. Homodimer. It depends on [4Fe-4S] cluster as a cofactor.

It catalyses the reaction 5-amino-1-(5-phospho-beta-D-ribosyl)imidazole + AH2 + S-adenosyl-L-methionine = 5-hydroxybenzimidazole + 5'-deoxyadenosine + formate + L-methionine + A + NH4(+) + phosphate + 2 H(+). It functions in the pathway cofactor biosynthesis; adenosylcobalamin biosynthesis. Catalyzes the complex conversion of aminoimidazole ribotide (AIR) to 5-hydroxybenzimidazole (5-HBI) in a radical S-adenosyl-L-methionine (SAM)-dependent reaction. Is thus involved in the anaerobic biosynthesis of dimethylbenzimidazole (DMB), the lower axial ligand of vitamin B12 (cobalamin). This Desulfuromonas acetoxidans (strain DSM 684 / 11070) protein is 5-hydroxybenzimidazole synthase.